Reading from the N-terminus, the 230-residue chain is MTKESADNYYNPLMLWGYDVFVQVLTNSFWWRCSTKGILVPFFLDNSTTNHMEVGAGTGYFLRAKLDHERSKLKSSDDKTLWPQNLTLVDFHERCMNKAANRISPVRPNRVLANIMEPIPLKGQKFDSIAIMYVLHCIAATPEAKGRVFANLKPFLADEGTLFGSTVLGKGVKHNLIGGFLMWLYNYIGMFDNWDDGKEDFLKPLREHFEVVESEVVGTVLLFKAEKPRH.

The protein belongs to the methyltransferase superfamily.

It functions in the pathway polyketide biosynthesis. In terms of biological role, methyltransferase; part of the gene cluster that mediates the biosynthesis of aurovertins, fungal polyketides that exhibit potent inhibition of adenosine triphosphate synthase. Tha biosynthesis starts with the HR-PKS aurA that selects propionate as the starter unit; synthesizes a hexa-ene chain through the repeated functions of the KR and DH domains in the first six iterations; selectively introduces three alpha-methyl substitutions at C4, C6, and C16 using the S-adensylmethionine-dependent cMET; and shuts off KR and DH in the last three iterations to afford a 1,3,5-triketo portion that can undergo intramolecular cyclization to yield the alpha-pyrone intermediate. AurE may act as a cyclase and enhances the rate of pyrone formation and product release of aurA. The methyltransferase aurB then methylates the C17 hydroxyl group. C17 methylation is required to initiate epoxidation by the downstream monooxygenase aurC. The monooxygenase aurC and the epoxide hydrolase aurD can iteratively transform the terminal triene portion of the methylated precursor into the dioxabicyclo[3.2.1]octane scaffold of aurovertin E. Epoxidation modifications of the precursor occur in two separate steps; bis-epoxidation of the two terminal olefins takes place first, followed by another epoxidation that occurs at C7-C8 after tetrahydrofuran formation. The O-acyltransferase aurG converts aurovertin E to aurovertin A. This chain is Methyltransferase aurB, found in Calcarisporium arbuscula (Dendryphion arbuscula).